The primary structure comprises 1002 residues: Transposase for transposon gamma-delta (1002 aa).

This sequence belongs to the transposase 7 family.

Required for transposition of transposon Tn1000. This Escherichia coli (strain K12) protein is Transposase for transposon gamma-delta (tnpA).